Consider the following 143-residue polypeptide: Large ribosomal subunit protein uL11 (143 aa).

The protein belongs to the universal ribosomal protein uL11 family. Part of the ribosomal stalk of the 50S ribosomal subunit. Interacts with L10 and the large rRNA to form the base of the stalk. L10 forms an elongated spine to which L12 dimers bind in a sequential fashion forming a multimeric L10(L12)X complex. Post-translationally, one or more lysine residues are methylated.

In terms of biological role, forms part of the ribosomal stalk which helps the ribosome interact with GTP-bound translation factors. The sequence is that of Large ribosomal subunit protein uL11 from Borreliella afzelii (strain PKo) (Borrelia afzelii).